The primary structure comprises 451 residues: PTS system galactose-specific EIIC component (451 aa).

The PTS EIIC type-3 domain occupies 8-427; that stretch reads LNKTLMPLAS…VLNVLIYYPF (420 aa). The next 11 membrane-spanning stretches (helical) occupy residues 40–60, 69–89, 104–124, 151–171, 190–210, 239–259, 263–283, 296–316, 332–352, 356–376, and 403–423; these read LGIALLTIIGYFPVPAWVDFL, FSAVIGAVTSALAIYVTYNFA, GLLSIASLLMLMPQIITVPVV, TGSTGLIVAIIIGFIVSLVYI, VVDSLSPAIISMVIFCLMFGI, ANPWVLMGIFTFGNFLWFFGI, LIGGILNPLLLTMSYANIDAY, IVFAVGANAWGGSGNTYGLVI, LGAIPSIFNISEPLLFGLPMM, LFFIPLVFQPAILGTVALGLA, and ISGGLPFLIIFAICLVLNVLI.

It is found in the cell membrane. In terms of biological role, the phosphoenolpyruvate-dependent sugar phosphotransferase system (PTS), a major carbohydrate active transport system, catalyzes the phosphorylation of incoming sugar substrates concomitant with their translocation across the cell membrane. Involved in galactose transport with PtcA and PtcB. In Lactococcus lactis subsp. cremoris (strain MG1363), this protein is PTS system galactose-specific EIIC component.